The primary structure comprises 539 residues: Carboxypeptidase Y homolog A (539 aa).

An N-terminal signal peptide occupies residues 1–17; the sequence is MKALTATLLVGTALAAV. Residues 18–122 constitute a propeptide that is removed on maturation; the sequence is PPQQPIQVPT…KLEKYDLRVK (105 aa). 5 disulfides stabilise this stretch: cysteine 176-cysteine 416, cysteine 310-cysteine 324, cysteine 334-cysteine 357, cysteine 341-cysteine 350, and cysteine 379-cysteine 386. N-linked (GlcNAc...) asparagine glycosylation occurs at asparagine 207. Residue serine 263 is part of the active site. The active site involves aspartate 455. Asparagine 506 carries an N-linked (GlcNAc...) asparagine glycan. Histidine 517 is a catalytic residue.

This sequence belongs to the peptidase S10 family.

The protein resides in the vacuole. The enzyme catalyses Release of a C-terminal amino acid with broad specificity.. Vacuolar carboxypeptidase involved in degradation of small peptides. Digests preferentially peptides containing an aliphatic or hydrophobic residue in P1' position, as well as methionine, leucine or phenylalanine in P1 position of ester substrate. The sequence is that of Carboxypeptidase Y homolog A (cpyA) from Coccidioides posadasii (strain C735) (Valley fever fungus).